We begin with the raw amino-acid sequence, 1160 residues long: Envelope glycoprotein (1160 aa).

Residues 1-22 form the signal peptide; that stretch reads MDTPGSLQVIAIISLLLVGGAS. Residues 23-853 are Extracellular-facing; the sequence is QPATFLEKAL…DGSVWSQLQL (831 aa). 13 N-linked (GlcNAc...) asparagine; by host glycosylation sites follow: Asn50, Asn95, Asn109, Asn134, Asn148, Asn232, Asn254, Asn304, Asn323, Asn621, Asn664, Asn722, and Asn771. The disordered stretch occupies residues 230–251; it reads VPNSTLSPTGTTDFTKFTPNPI. Residues 854 to 874 traverse the membrane as a helical segment; the sequence is IIVVITCTIPLLWVLNTCLFF. At 875–1048 the chain is on the cytoplasmic side; that stretch reads KLRRAIRRER…VNQHAEYMGK (174 aa). The helical transmembrane segment at 1049 to 1069 threads the bilayer; that stretch reads PVIVTLAGLVITPVGLAWIPL. At 1070-1127 the chain is on the extracellular side; that stretch reads PQQEPLEKLFMVPNSMPHVTVAMADYHETKEMGKIVKDINNEELLLVKPQLFKWGPEG. The chain crosses the membrane as a helical span at residues 1128–1148; that stretch reads FFVACPLVIRGVVTGHSLLHI. At 1149-1160 the chain is on the cytoplasmic side; the sequence is ACPATAVQAEGT.

As to quaternary structure, the mature envelope protein (Env) consists of a trimer of SU-TM heterodimers attached by non-covalent interactions or by a labile interchain disulfide bond. In terms of processing, specific enzymatic cleavages in vivo yield mature proteins. Envelope glycoproteins are synthesized as an inactive precursor that is N-glycosylated and processed likely by host cell furin or by a furin-like protease in the Golgi to yield the mature SU and TM proteins. The cleavage site between SU and TM requires the minimal sequence [KR]-X-[KR]-R.

The protein localises to the virion membrane. The protein resides in the host cell membrane. Its function is as follows. (SU) attaches the virus to the host cell by binding to its receptor. This interaction triggers the refolding of the transmembrane protein (TM) and is thought to activate its fusogenic potential by unmasking its fusion peptide. Fusion occurs at the host cell plasma membrane. (TM) acts as a class I viral fusion protein. Under the current model, the protein has at least 3 conformational states: pre-fusion native state, pre-hairpin intermediate state, and post-fusion hairpin state. During viral and target cell membrane fusion, the coiled coil regions (heptad repeats) assume a trimer-of-hairpins structure, positioning the fusion peptide in close proximity to the C-terminal region of the ectodomain. The formation of this structure appears to drive apposition and subsequent fusion of viral and target cell membranes. Membranes fusion leads to delivery of the nucleocapsid into the cytoplasm. The sequence is that of Envelope glycoprotein (env) from Walleye dermal sarcoma virus (WDSV).